An 83-amino-acid chain; its full sequence is RNA-binding protein Hfq (83 aa).

Residues 9-68 (DPYLNALRKERIPVSIFLVNGIKLQGQIESFDQFVILLKNTVSQMVYKHAISTVVPARNV) form the Sm domain.

Belongs to the Hfq family. Homohexamer.

Its function is as follows. RNA chaperone that binds small regulatory RNA (sRNAs) and mRNAs to facilitate mRNA translational regulation in response to envelope stress, environmental stress and changes in metabolite concentrations. Also binds with high specificity to tRNAs. The polypeptide is RNA-binding protein Hfq (Marinobacter nauticus (strain ATCC 700491 / DSM 11845 / VT8) (Marinobacter aquaeolei)).